Consider the following 152-residue polypeptide: 3-dehydroquinate dehydratase (152 aa).

Tyrosine 26 serves as the catalytic Proton acceptor. Positions 78, 84, and 91 each coordinate substrate. Histidine 104 serves as the catalytic Proton donor. Residues 105–106 and arginine 115 contribute to the substrate site; that span reads LS.

Belongs to the type-II 3-dehydroquinase family. Homododecamer.

The enzyme catalyses 3-dehydroquinate = 3-dehydroshikimate + H2O. Its pathway is metabolic intermediate biosynthesis; chorismate biosynthesis; chorismate from D-erythrose 4-phosphate and phosphoenolpyruvate: step 3/7. Functionally, catalyzes a trans-dehydration via an enolate intermediate. This chain is 3-dehydroquinate dehydratase, found in Idiomarina loihiensis (strain ATCC BAA-735 / DSM 15497 / L2-TR).